A 782-amino-acid chain; its full sequence is Phosphoribosylformylglycinamidine synthase subunit PurL (782 aa).

The active site involves histidine 50. Residues tyrosine 53 and lysine 92 each contribute to the ATP site. Mg(2+) is bound at residue glutamate 94. Residues 95 to 98 and arginine 117 contribute to the substrate site; that span reads SHNH. Residue histidine 96 is the Proton acceptor of the active site. Aspartate 118 is a Mg(2+) binding site. Glutamine 241 lines the substrate pocket. Residue aspartate 269 participates in Mg(2+) binding. 313 to 315 is a substrate binding site; that stretch reads ESQ. ATP-binding residues include aspartate 520 and glycine 557. Residue asparagine 558 participates in Mg(2+) binding. Serine 560 is a binding site for substrate.

Belongs to the FGAMS family. As to quaternary structure, monomer. Part of the FGAM synthase complex composed of 1 PurL, 1 PurQ and 2 PurS subunits.

It is found in the cytoplasm. The enzyme catalyses N(2)-formyl-N(1)-(5-phospho-beta-D-ribosyl)glycinamide + L-glutamine + ATP + H2O = 2-formamido-N(1)-(5-O-phospho-beta-D-ribosyl)acetamidine + L-glutamate + ADP + phosphate + H(+). Its pathway is purine metabolism; IMP biosynthesis via de novo pathway; 5-amino-1-(5-phospho-D-ribosyl)imidazole from N(2)-formyl-N(1)-(5-phospho-D-ribosyl)glycinamide: step 1/2. In terms of biological role, part of the phosphoribosylformylglycinamidine synthase complex involved in the purines biosynthetic pathway. Catalyzes the ATP-dependent conversion of formylglycinamide ribonucleotide (FGAR) and glutamine to yield formylglycinamidine ribonucleotide (FGAM) and glutamate. The FGAM synthase complex is composed of three subunits. PurQ produces an ammonia molecule by converting glutamine to glutamate. PurL transfers the ammonia molecule to FGAR to form FGAM in an ATP-dependent manner. PurS interacts with PurQ and PurL and is thought to assist in the transfer of the ammonia molecule from PurQ to PurL. The chain is Phosphoribosylformylglycinamidine synthase subunit PurL from Cyanothece sp. (strain PCC 7425 / ATCC 29141).